The chain runs to 276 residues: Ribosomal RNA small subunit methyltransferase A (276 aa).

Positions 27, 29, 54, 75, 101, and 122 each coordinate S-adenosyl-L-methionine.

This sequence belongs to the class I-like SAM-binding methyltransferase superfamily. rRNA adenine N(6)-methyltransferase family. RsmA subfamily.

It is found in the cytoplasm. The enzyme catalyses adenosine(1518)/adenosine(1519) in 16S rRNA + 4 S-adenosyl-L-methionine = N(6)-dimethyladenosine(1518)/N(6)-dimethyladenosine(1519) in 16S rRNA + 4 S-adenosyl-L-homocysteine + 4 H(+). Functionally, specifically dimethylates two adjacent adenosines (A1518 and A1519) in the loop of a conserved hairpin near the 3'-end of 16S rRNA in the 30S particle. May play a critical role in biogenesis of 30S subunits. This chain is Ribosomal RNA small subunit methyltransferase A, found in Brucella abortus (strain S19).